The sequence spans 269 residues: Regulatory protein RecX (269 aa).

The protein belongs to the RecX family.

Its subcellular location is the cytoplasm. In terms of biological role, modulates RecA activity. The sequence is that of Regulatory protein RecX from Listeria monocytogenes serotype 4b (strain CLIP80459).